Reading from the N-terminus, the 29-residue chain is Brevinin-2Tc (29 aa).

A disulfide bridge links Cys-23 with Cys-29.

Belongs to the frog skin active peptide (FSAP) family. Brevinin subfamily. In terms of tissue distribution, expressed by the skin glands.

The protein localises to the secreted. In terms of biological role, antibacterial activity against representative Gram-negative and Gram-positive bacteria. The protein is Brevinin-2Tc of Rana temporaria (European common frog).